The sequence spans 258 residues: Flagellin B3 (258 aa).

Positions 1–8 (MRFLKKRG) are excised as a propeptide.

This sequence belongs to the archaeal flagellin family.

The protein resides in the archaeal flagellum. Flagellin is the subunit protein which polymerizes to form the filaments of archaeal flagella. The sequence is that of Flagellin B3 (flaB3) from Thermococcus kodakarensis (strain ATCC BAA-918 / JCM 12380 / KOD1) (Pyrococcus kodakaraensis (strain KOD1)).